The following is a 489-amino-acid chain: Inactive receptor-like serine/threonine-protein kinase At2g40270 (489 aa).

The first 23 residues, 1–23 (MLFKMRSFVAFVLLLSWFGSCCS), serve as a signal peptide directing secretion. The Extracellular portion of the chain corresponds to 24 to 139 (LKDQAVDFLK…PRNSHSSVPL (116 aa)). A disordered region spans residues 67-130 (KDLPSRKDRK…SAPLANSPIP (64 aa)). A compositionally biased stretch (low complexity) spans 81–90 (AATTTPSSSP). Residues 99–116 (TKASTVSEPQKRSSTQDV) are compositionally biased toward polar residues. The segment covering 117–130 (SPSPSAPLANSPIP) has biased composition (low complexity). A helical membrane pass occupies residues 140 to 160 (VVGCVGGAFFLLLVATGLYFF). Residues 161-489 (TSKAGKTVNP…WAELEVLSTA (329 aa)) are Cytoplasmic-facing. The Protein kinase domain occupies 200-460 (EDFSNVIGSC…PTMQEVTGWL (261 aa)).

The protein belongs to the protein kinase superfamily. Ser/Thr protein kinase family.

The protein resides in the cell membrane. The protein is Inactive receptor-like serine/threonine-protein kinase At2g40270 of Arabidopsis thaliana (Mouse-ear cress).